Reading from the N-terminus, the 818-residue chain is LPS-assembly protein LptD (818 aa).

The N-terminal stretch at 1 to 33 is a signal peptide; sequence MVNETMKHQFKFNPLATAIFTLLCSGSIQSSYA.

This sequence belongs to the LptD family. As to quaternary structure, component of the lipopolysaccharide transport and assembly complex. Interacts with LptE and LptA.

Its subcellular location is the cell outer membrane. In terms of biological role, together with LptE, is involved in the assembly of lipopolysaccharide (LPS) at the surface of the outer membrane. This chain is LPS-assembly protein LptD, found in Acinetobacter baumannii (strain ATCC 19606 / DSM 30007 / JCM 6841 / CCUG 19606 / CIP 70.34 / NBRC 109757 / NCIMB 12457 / NCTC 12156 / 81).